A 193-amino-acid polypeptide reads, in one-letter code: Zinc finger CCHC domain-containing protein 17 (193 aa).

In terms of domain architecture, S1 motif; truncated spans 1–40 (MSSCRVDKPSEIVDVGDKVWVKLIGREMKNDRIKVSLSMK). At Ser-66 the chain carries Phosphoserine. Residues 83–100 (TTCKKCGCKGHFAKDCFM) form a CCHC-type zinc finger. The residue at position 96 (Lys-96) is an N6-acetyllysine. A disordered region spans residues 113-193 (EEEEKEEAKS…KKKHKKKHKE (81 aa)). Basic and acidic residues predominate over residues 118–129 (EEAKSAEFEKPV). A compositionally biased stretch (basic residues) spans 134–150 (PSRKRKKEKKKKKHRDR). Residue Ser-135 is modified to Phosphoserine. The span at 163–177 (DTGKRARHTSKDSKA) shows a compositional bias: basic and acidic residues. The span at 178–193 (AKKKKKKKKHKKKHKE) shows a compositional bias: basic residues.

May interact with PNN. May associate with the 60 S ribosomal subunit.

The protein localises to the nucleus. Its subcellular location is the nucleolus. The chain is Zinc finger CCHC domain-containing protein 17 (ZCCHC17) from Macaca fascicularis (Crab-eating macaque).